We begin with the raw amino-acid sequence, 169 residues long: Ureidoglycolate lyase (169 aa).

Belongs to the ureidoglycolate lyase family. In terms of assembly, homodimer. Ni(2+) serves as cofactor.

It carries out the reaction (S)-ureidoglycolate = urea + glyoxylate. It participates in nitrogen metabolism; (S)-allantoin degradation. Its function is as follows. Catalyzes the catabolism of the allantoin degradation intermediate (S)-ureidoglycolate, generating urea and glyoxylate. Involved in the utilization of allantoin as nitrogen source. In Brucella anthropi (strain ATCC 49188 / DSM 6882 / CCUG 24695 / JCM 21032 / LMG 3331 / NBRC 15819 / NCTC 12168 / Alc 37) (Ochrobactrum anthropi), this protein is Ureidoglycolate lyase.